The chain runs to 249 residues: MKFADAMQCIGKESLCFHPELNVFVNYPVLIGCHIGYLVVIVLLYKFMKGRTAYVLKYPMMLYNTAQVALSLVMAINLGQFLVYGVFNLNGGFTGTIEYWIFVHYATKFLDMFDTYFIVLRKKEEQLSFLHIYHHVTIGFIWGLLLHHGVANGTAFFGAWINSAVHALMYFHYLYTSLGYTNPLKTYLTQLQMIQFALCILHAVLAVVAHSPIPKKWAVLQLCYHLTLLYLFMRFYRKGMRKLKRKAKV.

A run of 3 helical transmembrane segments spans residues 23–43 (VFVN…VIVL), 68–88 (VALS…GVFN), and 100–120 (WIFV…FIVL). The short motif at 131–135 (HIYHH) is the HxxHH motif element. H134 serves as the catalytic Nucleophile. 4 consecutive transmembrane segments (helical) span residues 138-158 (IGFI…AFFG), 159-179 (AWIN…TSLG), 193-213 (MIQF…HSPI), and 217-236 (WAVL…MRFY).

Belongs to the ELO family.

The protein resides in the membrane. It carries out the reaction an acyl-CoA + malonyl-CoA + H(+) = a 3-oxoacyl-CoA + CO2 + CoA. It participates in lipid metabolism; polyunsaturated fatty acid biosynthesis. In terms of biological role, involved in the synthesis of fatty acids. Elongates C20 polyunsaturated fatty acids (PUFAs) with a preference for n-6 PUFAs. The polypeptide is Fatty acid elongase 5 (Leishmania major).